Here is a 115-residue protein sequence, read N- to C-terminus: Somatostatin-1 (115 aa).

Residues methionine 1–alanine 24 form the signal peptide. Positions alanine 25 to arginine 88 are excised as a propeptide. Residues asparagine 65–leucine 95 form a disordered region. The segment covering arginine 75–arginine 88 has biased composition (basic and acidic residues). Cysteines 104 and 115 form a disulfide.

The protein belongs to the somatostatin family.

The protein resides in the secreted. Its function is as follows. Somatostatin inhibits the release of somatotropin. The chain is Somatostatin-1 (sst1) from Protopterus annectens (African lungfish).